The sequence spans 396 residues: DNA-directed RNA polymerase subunit 6 (396 aa).

Disordered stretches follow at residues 1 to 137 (MSSK…DIED) and 290 to 396 (NQQK…DYSE). Composition is skewed to acidic residues over residues 21 to 53 (EYYD…DDEN), 76 to 88 (IDPD…DTDG), and 97 to 137 (EMGE…DIED). Positions 290-312 (NQQKNSTTDTETLSTQENASTRV) are enriched in polar residues. Composition is skewed to low complexity over residues 313 to 338 (SGSN…SKSN) and 346 to 366 (NSRT…SRTG). Basic residues predominate over residues 367 to 380 (SKSKKSSNTKSKSK). Residues 385–396 (NSDDSDYSDYSE) show a composition bias toward acidic residues.

Belongs to the archaeal Rpo6/eukaryotic RPB6 RNA polymerase subunit family.

It carries out the reaction RNA(n) + a ribonucleoside 5'-triphosphate = RNA(n+1) + diphosphate. In terms of biological role, DNA-dependent RNA polymerase catalyzes the transcription of DNA into RNA using the four ribonucleoside triphosphates as substrates. This is DNA-directed RNA polymerase subunit 6 from Acanthamoeba polyphaga (Amoeba).